The sequence spans 76 residues: Large ribosomal subunit protein eL20 (76 aa).

The protein belongs to the eukaryotic ribosomal protein eL20 family. Part of the 50S ribosomal subunit. Binds 23S rRNA.

The polypeptide is Large ribosomal subunit protein eL20 (Methanocaldococcus jannaschii (strain ATCC 43067 / DSM 2661 / JAL-1 / JCM 10045 / NBRC 100440) (Methanococcus jannaschii)).